Here is a 561-residue protein sequence, read N- to C-terminus: DNA ligase (561 aa).

Residue E249 coordinates ATP. Catalysis depends on K251, which acts as the N6-AMP-lysine intermediate. R256, R271, E301, F340, R417, and K423 together coordinate ATP.

Belongs to the ATP-dependent DNA ligase family. Mg(2+) is required as a cofactor.

It carries out the reaction ATP + (deoxyribonucleotide)n-3'-hydroxyl + 5'-phospho-(deoxyribonucleotide)m = (deoxyribonucleotide)n+m + AMP + diphosphate.. Its function is as follows. DNA ligase that seals nicks in double-stranded DNA during DNA replication, DNA recombination and DNA repair. The sequence is that of DNA ligase from Methanothermobacter thermautotrophicus (strain ATCC 29096 / DSM 1053 / JCM 10044 / NBRC 100330 / Delta H) (Methanobacterium thermoautotrophicum).